The following is a 265-amino-acid chain: Undecaprenyl-diphosphatase 1 (265 aa).

The next 7 membrane-spanning stretches (helical) occupy residues 4-24 (IIIA…PISS), 42-62 (AKTF…ILYH), 84-104 (FHVF…HDVI), 108-128 (LFQP…MILA), 184-204 (SEFS…LDLL), 217-237 (MFAV…VTFL), and 245-265 (LKPF…FVLL).

It belongs to the UppP family.

The protein localises to the cell membrane. The catalysed reaction is di-trans,octa-cis-undecaprenyl diphosphate + H2O = di-trans,octa-cis-undecaprenyl phosphate + phosphate + H(+). Catalyzes the dephosphorylation of undecaprenyl diphosphate (UPP). Confers resistance to bacitracin. This Bacillus cereus (strain ZK / E33L) protein is Undecaprenyl-diphosphatase 1.